The sequence spans 317 residues: Putative 2-hydroxyacid dehydrogenase SAB2178 (317 aa).

NAD(+)-binding positions include 155-156 (EI), 234-236 (ASR), and Asp260. Arg236 is a catalytic residue. The active site involves Glu265. The Proton donor role is filled by His283. An NAD(+)-binding site is contributed by 283-286 (HIGN).

It belongs to the D-isomer specific 2-hydroxyacid dehydrogenase family.

This is Putative 2-hydroxyacid dehydrogenase SAB2178 from Staphylococcus aureus (strain bovine RF122 / ET3-1).